The primary structure comprises 370 residues: 3-isopropylmalate dehydrogenase (370 aa).

77–90 (GAKWDGVPYEARPE) contacts NAD(+). R97, R107, R135, and D226 together coordinate substrate. D226, D250, and D254 together coordinate Mg(2+). 290-302 (GSAPDIAGKGLAN) contributes to the NAD(+) binding site.

It belongs to the isocitrate and isopropylmalate dehydrogenases family. LeuB type 1 subfamily. Homodimer. It depends on Mg(2+) as a cofactor. Mn(2+) serves as cofactor.

The protein localises to the cytoplasm. The catalysed reaction is (2R,3S)-3-isopropylmalate + NAD(+) = 4-methyl-2-oxopentanoate + CO2 + NADH. It functions in the pathway amino-acid biosynthesis; L-leucine biosynthesis; L-leucine from 3-methyl-2-oxobutanoate: step 3/4. Functionally, catalyzes the oxidation of 3-carboxy-2-hydroxy-4-methylpentanoate (3-isopropylmalate) to 3-carboxy-4-methyl-2-oxopentanoate. The product decarboxylates to 4-methyl-2 oxopentanoate. The chain is 3-isopropylmalate dehydrogenase from Rhodopseudomonas palustris (strain BisB18).